Reading from the N-terminus, the 149-residue chain is Putative pre-16S rRNA nuclease (149 aa).

The protein belongs to the YqgF nuclease family.

The protein localises to the cytoplasm. Functionally, could be a nuclease involved in processing of the 5'-end of pre-16S rRNA. This chain is Putative pre-16S rRNA nuclease, found in Burkholderia lata (strain ATCC 17760 / DSM 23089 / LMG 22485 / NCIMB 9086 / R18194 / 383).